The sequence spans 357 residues: Acyl-coenzyme A diphosphatase NUDT19 (357 aa).

One can recognise a Nudix hydrolase domain in the interval 10–242 (AATVMLAAGW…IWLAPPQFYE (233 aa)). The disordered stretch occupies residues 72–94 (PRFGLGPEPPRQPPFPGLSHGDA). Over residues 78-87 (PEPPRQPPFP) the composition is skewed to pro residues. Residues 97-118 (AALPDDVALRICAIRETFEEAG) carry the Nudix box motif. The Mg(2+) site is built by Glu-112 and Glu-116. An N6-succinyllysine modification is found at Lys-300. The Microbody targeting signal motif lies at 355-357 (AHL).

Belongs to the Nudix hydrolase family. Monomer. It depends on Mg(2+) as a cofactor. Mn(2+) serves as cofactor.

It localises to the peroxisome. It carries out the reaction an acyl-CoA + H2O = an acyl-4'-phosphopantetheine + adenosine 3',5'-bisphosphate + 2 H(+). The catalysed reaction is CoA + H2O = (R)-4'-phosphopantetheine + adenosine 3',5'-bisphosphate + 2 H(+). The enzyme catalyses hexanoyl-CoA + H2O = hexanoyl-4'-phosphopantetheine + adenosine 3',5'-bisphosphate + 2 H(+). It catalyses the reaction octanoyl-CoA + H2O = S-octanoyl-4'-phosphopantetheine + adenosine 3',5'-bisphosphate + 2 H(+). It carries out the reaction butanoyl-CoA + H2O = S-butanoyl-4'-phosphopantetheine + adenosine 3',5'-bisphosphate + 2 H(+). The catalysed reaction is propanoyl-CoA + H2O = propanoyl-4'-phosphopantetheine + adenosine 3',5'-bisphosphate + 2 H(+). The enzyme catalyses malonyl-CoA + H2O = malonyl-4'-phosphopantetheine + adenosine 3',5'-bisphosphate + 2 H(+). It catalyses the reaction succinyl-CoA + H2O = succinyl-4'-phosphopantetheine + adenosine 3',5'-bisphosphate + 2 H(+). It carries out the reaction choloyl-CoA + H2O = S-choloyl-4'-phosphopantetheine + adenosine 3',5'-bisphosphate + 2 H(+). The catalysed reaction is 4,8-dimethylnonanoyl-CoA + H2O = S-(4,8-dimethylnonanoyl)-4'-phosphopantetheine + adenosine 3',5'-bisphosphate + 2 H(+). The enzyme catalyses (9Z,12Z,15Z)-octadecatrienoyl-CoA + H2O = S-(9Z,12Z,15Z-octadecatrienoyl)-4'-phosphopantetheine + adenosine 3',5'-bisphosphate + 2 H(+). It catalyses the reaction (9Z,12Z)-octadecadienoyl-CoA + H2O = S-(9Z,12Z-octadecadienoyl)-4'-phosphopantetheine + adenosine 3',5'-bisphosphate + 2 H(+). It carries out the reaction (9Z)-hexadecenoyl-CoA + H2O = S-(9Z-hexadecenoyl)-4'-phosphopantetheine + adenosine 3',5'-bisphosphate + 2 H(+). The catalysed reaction is (9Z)-tetradecenoyl-CoA + H2O = S-(9Z-tetradecenoyl)-4'-phosphopantetheine + adenosine 3',5'-bisphosphate + 2 H(+). The enzyme catalyses (6Z)-octenoyl-CoA + H2O = S-(6Z-octenoyl)-4'-phosphopantetheine + adenosine 3',5'-bisphosphate + 2 H(+). It catalyses the reaction hexadecanoyl-CoA + H2O = S-hexadecanoyl-4'-phosphopantetheine + adenosine 3',5'-bisphosphate + 2 H(+). It carries out the reaction tetradecanoyl-CoA + H2O = tetradecanoyl-4'-phosphopantetheine + adenosine 3',5'-bisphosphate + 2 H(+). The catalysed reaction is dodecanoyl-CoA + H2O = S-dodecanoyl-4'-phosphopantetheine + adenosine 3',5'-bisphosphate + 2 H(+). The enzyme catalyses a 5'-end CoA-ribonucleoside in mRNA + H2O = a 5'-end phospho-adenosine-phospho-ribonucleoside in mRNA + (R)-4'-phosphopantetheine + 2 H(+). Fatty acyl-coenzyme A (CoA) diphosphatase that hydrolyzes fatty acyl-CoA to yield acyl-4'-phosphopantetheine and adenosine 3',5'-bisphosphate. Mediates the hydrolysis of a wide range of CoA esters, including choloyl-CoA and branched-chain fatty-acyl-CoA esters and at low substrate concentrations medium and long-chain fatty-acyl-CoA esters are the primary substrates. Highest activity seen with medium-chain acyl-CoA esters and higher rates of activity seen with the unsaturated acyl-CoA esters compared with the saturated esters. Exhibits decapping activity towards dpCoA-capped RNAs in vitro. The protein is Acyl-coenzyme A diphosphatase NUDT19 (Nudt19) of Mus caroli (Ryukyu mouse).